The following is a 462-amino-acid chain: Cysteine--tRNA ligase (462 aa).

Cys-30 serves as a coordination point for Zn(2+). Residues 32 to 42 (MTVYDYCHVGH) carry the 'HIGH' region motif. Cys-214, His-239, and Glu-243 together coordinate Zn(2+). A 'KMSKS' region motif is present at residues 271 to 275 (KMSKS). ATP is bound at residue Lys-274.

The protein belongs to the class-I aminoacyl-tRNA synthetase family. As to quaternary structure, monomer. Zn(2+) is required as a cofactor.

The protein localises to the cytoplasm. The catalysed reaction is tRNA(Cys) + L-cysteine + ATP = L-cysteinyl-tRNA(Cys) + AMP + diphosphate. In Cupriavidus necator (strain ATCC 17699 / DSM 428 / KCTC 22496 / NCIMB 10442 / H16 / Stanier 337) (Ralstonia eutropha), this protein is Cysteine--tRNA ligase.